Here is a 170-residue protein sequence, read N- to C-terminus: Photosystem II extrinsic protein V (170 aa).

The signal sequence occupies residues 1-33 (MVSVFSSLRQSFKGLLVLVPVLIGLAFISPAEA). Heme c is bound by residues C70, C73, H74, and M137.

Belongs to the cytochrome c family. PsbV subfamily. PSII is composed of 1 copy each of membrane proteins PsbA, PsbB, PsbC, PsbD, PsbE, PsbF, PsbH, PsbI, PsbJ, PsbK, PsbL, PsbM, PsbT, PsbX, PsbY, PsbZ, Psb30/Ycf12, peripheral proteins PsbO, CyanoQ (PsbQ), PsbU, PsbV and a large number of cofactors. It forms dimeric complexes. The cofactor is heme c.

The protein resides in the cellular thylakoid membrane. In terms of biological role, one of the extrinsic, lumenal subunits of photosystem II (PSII). PSII is a light-driven water plastoquinone oxidoreductase, using light energy to abstract electrons from H(2)O, generating a proton gradient subsequently used for ATP formation. The extrinsic proteins stabilize the structure of photosystem II oxygen-evolving complex (OEC), the ion environment of oxygen evolution and protect the OEC against heat-induced inactivation. Low-potential cytochrome c that plays a role in the OEC of PSII. The sequence is that of Photosystem II extrinsic protein V from Synechococcus sp. (strain CC9902).